Consider the following 1599-residue polypeptide: Lacto-N-biosidase (1599 aa).

Residues 1–30 constitute a signal peptide (tat-type signal); that stretch reads MTSRQGRQAIAATAAMGVAVALALPTAAFA. H150 is a binding site for beta-D-galactosyl-(1-&gt;3)-N-acetyl-D-glucosamine. 6 PbH1 repeats span residues 165–190, 224–255, 277–299, 325–347, 348–388, and 389–437; these read VSYI…DTWK, MSNV…YFMA, FDHV…AVGY, STNV…TLMY, CDRP…WPWR, and CKDP…SFAS. Ca(2+)-binding residues include D178, D179, V182, and D238. K244 and H245 together coordinate beta-D-galactosyl-(1-&gt;3)-N-acetyl-D-glucosamine. W387, D411, D418, and C441 together coordinate beta-D-galactosyl-(1-&gt;3)-N-acetyl-D-glucosamine. Residue D411 is the Proton donor/acceptor of the active site. D418 functions as the Nucleophile in the catalytic mechanism. One copy of the PbH1 7 repeat lies at 469–506; that stretch reads GPGNHIYNNTVYVDADSQVLTKRSNSQSLFENNIFINA. An FIVAR domain is found at 1436–1498; sequence DKSTLKATVE…NALRDAIDGL (63 aa). Residues 1494 to 1509 show a composition bias toward basic and acidic residues; it reads AIDGLEKKPVDPDPNP. The segment at 1494-1568 is disordered; sequence AIDGLEKKPV…DGATTGGKLT (75 aa). Residues 1535-1558 are compositionally biased toward gly residues; sequence DGSGNGSGTGNGSGSGNGSTGSGS. Residues 1559–1568 show a composition bias toward low complexity; it reads DGATTGGKLT. Residues 1574–1594 form a helical membrane-spanning segment; that stretch reads VAGAAAMVALTAAAGIGLAAA.

This sequence belongs to the glycosyl hydrolase 136 (GH136) family. Homodimer. The cofactor is Ca(2+). Mg(2+) is required as a cofactor. Post-translationally, predicted to be exported by the Tat system. The position of the signal peptide cleavage has not been experimentally proven.

It is found in the cell membrane. It catalyses the reaction beta-D-Gal-(1-&gt;3)-beta-D-GlcNAc-(1-&gt;3)-beta-D-Gal-(1-&gt;4)-D-Glc + H2O = beta-D-galactosyl-(1-&gt;3)-N-acetyl-D-glucosamine + lactose. With respect to regulation, requires the chaperone LnbY for its proper folding and active expression. Is potently and competitively inhibited by LNB-PUGNAc and LNB-NHAcDNJ in vitro. Its function is as follows. Present in the infant gut, this enzyme is involved in the assimilation of type-1 human milk oligosaccharides (HMOs). It hydrolyzes via a retaining mechanism the beta-D-GlcNAc-(1-&gt;3)-beta-D-Gal linkage in lacto-N-tetraose (LNT or beta-D-Gal-(1-&gt;3)-beta-D-GlcNAc-(1-&gt;3)-beta-D-Gal-(1-&gt;4)-D-Glc), an abundant HMO unique to human breast milk, releasing lacto-N-biose (LNB or beta-D-Gal-(1-&gt;3)-D-GlcNAc) and lactose. With a much lower efficiency, is also able to cleave the same linkage in lacto-N-fucopentaose I (alpha-Fuc(1-&gt;2)-beta-D-Gal-(1-&gt;3)-beta-D-GlcNAc(1-&gt;3)-beta-D-Gal-(1-&gt;4)-D-Glc), and sialyllacto-N-tetraose a (alpha-Neu5Ac-(2-&gt;3)-beta-D-Gal-(1-&gt;3)-beta-D-GlcNAc-(1-&gt;3)-beta-D-Gal-(1-&gt;4)-D-Glc). Is a key enzymatic factor for growth and proliferation of B.longum in the gut ecosystem of breast-fed infants. This Bifidobacterium longum subsp. longum (strain ATCC 15707 / DSM 20219 / JCM 1217 / NCTC 11818 / E194b) protein is Lacto-N-biosidase.